A 691-amino-acid chain; its full sequence is L-type lectin-domain containing receptor kinase S.6 (691 aa).

Positions 1-25 are cleaved as a signal peptide; that stretch reads MNHHHYSLVIFHLILFLSLDFPTLS. The Extracellular segment spans residues 26–311; sequence HRFSPPLQNL…VVGLKIPVWS (286 aa). Residues 27-257 form a legume-lectin like region; that stretch reads RFSPPLQNLT…LHIVERWKFR (231 aa). N-linked (GlcNAc...) asparagine glycans are attached at residues N34 and N89. The helical transmembrane segment at 312–332 threads the bilayer; it reads LLPGLAAIVILVAFIVFSLIC. Residues 333–691 lie on the Cytoplasmic side of the membrane; it reads GKKRISEEAD…PWMTPKSHFS (359 aa). The Protein kinase domain maps to 366–653; it reads FNENAIVGQG…IRGEAPLPVL (288 aa). Residues 372–380 and K394 each bind ATP; that span reads VGQGASATV. D500 serves as the catalytic Proton acceptor.

In the C-terminal section; belongs to the protein kinase superfamily. Ser/Thr protein kinase family. It in the N-terminal section; belongs to the leguminous lectin family.

Its subcellular location is the cell membrane. The catalysed reaction is L-seryl-[protein] + ATP = O-phospho-L-seryl-[protein] + ADP + H(+). It catalyses the reaction L-threonyl-[protein] + ATP = O-phospho-L-threonyl-[protein] + ADP + H(+). Its function is as follows. Involved in resistance response to the pathogenic oomycetes Phytophthora infestans and Phytophthora capsici and to the pathogenic bacteria Pseudomonas syringae. The protein is L-type lectin-domain containing receptor kinase S.6 of Arabidopsis thaliana (Mouse-ear cress).